An 842-amino-acid polypeptide reads, in one-letter code: Pentatricopeptide repeat-containing protein At3g22690 (842 aa).

PPR repeat units lie at residues 98 to 132 (TCFM…GISP), 133 to 167 (DKYT…GYAK), 168 to 202 (DLFV…NVVS), 203 to 234 (WTSM…EVTP), 235 to 269 (NSVT…GIEV), 270 to 300 (NDLM…YGAS), 301 to 335 (NLDL…GVRP), 336 to 370 (DRIS…GFES), 371 to 401 (WDNI…MSNK), 402 to 436 (TVVT…NIVS), 437 to 463 (WNTI…MQSQ), 469 to 503 (DGVT…GIQL), 504 to 534 (DVRL…LTNR), 535 to 569 (DVSA…GLKP), 570 to 605 (DGVA…GVSP), and 606 to 636 (EDVH…MPME). The type E motif stretch occupies residues 641–716 (IWNSLLAACR…PPGTSSIQIR (76 aa)). The interval 717 to 747 (GKTHEFTSGDESHPEMPNIEAMLDEVSQRAS) is type E(+) motif. Residues 748-842 (HLGHVPDLSN…QGKCSCGDFW (95 aa)) are type DYW motif.

The protein belongs to the PPR family. PCMP-H subfamily.

The chain is Pentatricopeptide repeat-containing protein At3g22690 (PCMP-H56) from Arabidopsis thaliana (Mouse-ear cress).